A 697-amino-acid chain; its full sequence is Portal protein (697 aa).

Residues 633–697 form a disordered region; it reads MSREAAGGVP…RRAGGPYGFH (65 aa). The span at 664-689 shows a compositional bias: basic and acidic residues; that stretch reads ITADEERRGPERVGRFRNGGPDDPRR.

This sequence belongs to the herpesviridae portal protein family. Homododecamerizes. Interacts with terminase subunits TRM1 and TRM3.

Its subcellular location is the virion. It localises to the host nucleus. Functionally, forms a portal in the viral capsid through which viral DNA is translocated during DNA packaging. Assembles as a dodecamer at a single fivefold axe of the T=16 icosahedric capsid. Binds to the molecular motor that translocates the viral DNA, termed terminase. The polypeptide is Portal protein (UL104) (Homo sapiens (Human)).